The primary structure comprises 795 residues: Copper-exporting P-type ATPase (795 aa).

HMA domains follow at residues 5–70 and 72–138; these read QNAT…YDVV and DKAE…YDAQ. Cu(+)-binding residues include Cys16, Cys19, Cys83, and Cys86. 6 consecutive transmembrane segments (helical) span residues 161–181, 187–207, 224–244, 256–276, 412–432, and 440–460; these read LMIS…HLFN, ILMN…IIGW, MDVL…YEMI, LYFE…YLEA, YFVP…ITLV, and ALVA…GLAT. The active-site 4-aspartylphosphate intermediate is the Asp496. Mg(2+) contacts are provided by Asp690 and Asp694. 2 helical membrane-spanning segments follow: residues 747 to 764 and 770 to 788; these read NLFW…IAAM and WIAG…SNAL.

This sequence belongs to the cation transport ATPase (P-type) (TC 3.A.3) family. Type IB subfamily.

The protein resides in the cell membrane. It catalyses the reaction Cu(+)(in) + ATP + H2O = Cu(+)(out) + ADP + phosphate + H(+). In terms of biological role, involved in copper export. The polypeptide is Copper-exporting P-type ATPase (copA) (Staphylococcus haemolyticus (strain JCSC1435)).